The primary structure comprises 313 residues: Peroxidase 57 (313 aa).

A signal peptide spans 1-22 (MMKGAKFSSLLVLFFIFPIAFA). 4 disulfide bridges follow: Cys33/Cys109, Cys66/Cys71, Cys115/Cys309, and Cys192/Cys224. His64 functions as the Proton acceptor in the catalytic mechanism. Residues Asp65, Val68, Gly70, Asp72, and Ser74 each coordinate Ca(2+). A substrate-binding site is contributed by Pro155. His185 is a binding site for heme b. Thr186 provides a ligand contact to Ca(2+). The Ca(2+) site is built by Asp233, Ser236, and Asp241.

The protein belongs to the peroxidase family. Classical plant (class III) peroxidase subfamily. Requires heme b as cofactor. The cofactor is Ca(2+). As to expression, mainly expressed in roots.

The protein localises to the secreted. The catalysed reaction is 2 a phenolic donor + H2O2 = 2 a phenolic radical donor + 2 H2O. In terms of biological role, removal of H(2)O(2), oxidation of toxic reductants, biosynthesis and degradation of lignin, suberization, auxin catabolism, response to environmental stresses such as wounding, pathogen attack and oxidative stress. These functions might be dependent on each isozyme/isoform in each plant tissue. This is Peroxidase 57 (PER57) from Arabidopsis thaliana (Mouse-ear cress).